We begin with the raw amino-acid sequence, 255 residues long: 4-hydroxy-tetrahydrodipicolinate reductase (255 aa).

Residues 13–18, 90–92, and 114–117 contribute to the NAD(+) site; these read GCNGKM, CTT, and SANM. His-147 serves as the catalytic Proton donor/acceptor. Position 148 (His-148) interacts with (S)-2,3,4,5-tetrahydrodipicolinate. Lys-151 (proton donor) is an active-site residue. A (S)-2,3,4,5-tetrahydrodipicolinate-binding site is contributed by 157 to 158; it reads GT.

This sequence belongs to the DapB family.

It localises to the cytoplasm. It catalyses the reaction (S)-2,3,4,5-tetrahydrodipicolinate + NAD(+) + H2O = (2S,4S)-4-hydroxy-2,3,4,5-tetrahydrodipicolinate + NADH + H(+). The catalysed reaction is (S)-2,3,4,5-tetrahydrodipicolinate + NADP(+) + H2O = (2S,4S)-4-hydroxy-2,3,4,5-tetrahydrodipicolinate + NADPH + H(+). It functions in the pathway amino-acid biosynthesis; L-lysine biosynthesis via DAP pathway; (S)-tetrahydrodipicolinate from L-aspartate: step 4/4. Its function is as follows. Catalyzes the conversion of 4-hydroxy-tetrahydrodipicolinate (HTPA) to tetrahydrodipicolinate. The polypeptide is 4-hydroxy-tetrahydrodipicolinate reductase (Clostridium tetani (strain Massachusetts / E88)).